We begin with the raw amino-acid sequence, 485 residues long: tRNA sulfurtransferase (485 aa).

The THUMP domain maps to 61–165 (EELIALLQRI…DDKMMLVKTR (105 aa)). ATP contacts are provided by residues 183 to 184 (LI), lysine 265, glycine 287, and glutamine 296. A disulfide bridge connects residues cysteine 344 and cysteine 456. A Rhodanese domain is found at 404-483 (LGENEVILDI…FSNVRVFAKN (80 aa)). Cysteine 456 functions as the Cysteine persulfide intermediate in the catalytic mechanism.

This sequence belongs to the ThiI family.

It is found in the cytoplasm. It catalyses the reaction [ThiI sulfur-carrier protein]-S-sulfanyl-L-cysteine + a uridine in tRNA + 2 reduced [2Fe-2S]-[ferredoxin] + ATP + H(+) = [ThiI sulfur-carrier protein]-L-cysteine + a 4-thiouridine in tRNA + 2 oxidized [2Fe-2S]-[ferredoxin] + AMP + diphosphate. The catalysed reaction is [ThiS sulfur-carrier protein]-C-terminal Gly-Gly-AMP + S-sulfanyl-L-cysteinyl-[cysteine desulfurase] + AH2 = [ThiS sulfur-carrier protein]-C-terminal-Gly-aminoethanethioate + L-cysteinyl-[cysteine desulfurase] + A + AMP + 2 H(+). The protein operates within cofactor biosynthesis; thiamine diphosphate biosynthesis. Catalyzes the ATP-dependent transfer of a sulfur to tRNA to produce 4-thiouridine in position 8 of tRNAs, which functions as a near-UV photosensor. Also catalyzes the transfer of sulfur to the sulfur carrier protein ThiS, forming ThiS-thiocarboxylate. This is a step in the synthesis of thiazole, in the thiamine biosynthesis pathway. The sulfur is donated as persulfide by IscS. In Haemophilus influenzae (strain 86-028NP), this protein is tRNA sulfurtransferase.